We begin with the raw amino-acid sequence, 169 residues long: MYSMQLASCVTLTLVLLVNSAPTSSSTSSSTAEAQQQQQQQQQQQQHLEQLLMDLQELLSRMENYRNLKLPRMLTFKFYLPKQATELKDLQCLEDELGPLRHVLDLTQSKSFQLEDAENFISNIRVTVVKLKGSDNTFECQFDDESATVVDFLRRWIAFCQSIISTSPQ.

The N-terminal stretch at 1–20 is a signal peptide; the sequence is MYSMQLASCVTLTLVLLVNS. T23 carries an O-linked (GalNAc...) threonine glycan. Cysteines 92 and 140 form a disulfide.

This sequence belongs to the IL-2 family. In terms of tissue distribution, produced by immune cells including dendritic cells. In contrast, macrophages do not produce IL2 upon bacterial stimulation.

The protein localises to the secreted. Its function is as follows. Cytokine produced by activated CD4-positive helper T-cells and to a lesser extend activated CD8-positive T-cells and natural killer (NK) cells that plays pivotal roles in the immune response and tolerance. Binds to a receptor complex composed of either the high-affinity trimeric IL-2R (IL2RA/CD25, IL2RB/CD122 and IL2RG/CD132) or the low-affinity dimeric IL-2R (IL2RB and IL2RG). Interaction with the receptor leads to oligomerization and conformation changes in the IL-2R subunits resulting in downstream signaling starting with phosphorylation of JAK1 and JAK3. In turn, JAK1 and JAK3 phosphorylate the receptor to form a docking site leading to the phosphorylation of several substrates including STAT5. This process leads to activation of several pathways including STAT, phosphoinositide-3-kinase/PI3K and mitogen-activated protein kinase/MAPK pathways. Functions as a T-cell growth factor and can increase NK-cell cytolytic activity as well. Promotes strong proliferation of activated B-cells and subsequently immunoglobulin production. Plays a pivotal role in regulating the adaptive immune system by controlling the survival and proliferation of regulatory T-cells, which are required for the maintenance of immune tolerance. Moreover, participates in the differentiation and homeostasis of effector T-cell subsets, including Th1, Th2, Th17 as well as memory CD8-positive T-cells. In Mus musculus (Mouse), this protein is Interleukin-2 (Il2).